Consider the following 747-residue polypeptide: MQGGEPVSTMKVSESEGKLEGQATAVTPNKNSSCGGGISSSSSSRGGSAKGWQYSDHMENVYGYLMKYTNLVTGWQYRFFVLNNEAGLLEYFVNEQSRNQKPRGTLQLAGAVISPSDEDSHTFTVNAASGEQYKLRATDAKERQHWVSRLQICTQHHTEAIGKNNPPLKSRSFSLASSSNSPISQRRPSQNAISFFNVGHSKLQSLSKRTNLPPDHLVEVREMMSHAEGQQRDLIRRIECLPTSGHLSSLDQDLLMLKATSMATMNCLNDCFHILQLQHASHQKGSLPSGTTIEWLEPKISLSNHYKNGADQPFATDQSKPVAVPEEQPVAESGLLAREPEEINADDEIEDTCDHKEDDLGAVEEQRSVILHLLSQLKLGMDLTRVVLPTFILEKRSLLEMYADFMSHPDLFIAITNGATAEDRMIRFVEYYLTSFHEGRKGAIAKKPYNPIIGETFHCSWKMPKSEVASSVFSSSSTQGVTNHAPLSGESLTQVGSDCYTVRFVAEQVSHHPPVSGFYAECTERKMCVNAHVWTKSKFLGMSIGVTMVGEGILSLLEHGEEYTFSLPCAYARSILTVPWVELGGKVSVNCAKTGYSASITFHTKPFYGGKLHRVTAEVKHNITNTVVCRVQGEWNSVLEFTYSNGETKYVDLTKLAVTKKRVRPLEKQDPFESRRLWKNVTDSLRESEIDKATEHKHTLEERQRTEERHRTETGTPWKTKYFIKEGDGWVYHKPLWKIIPTTQPAE.

The residue at position 1 (methionine 1) is an N-acetylmethionine. The interval 1–50 (MQGGEPVSTMKVSESEGKLEGQATAVTPNKNSSCGGGISSSSSSRGGSAK) is disordered. Phosphoserine is present on serine 15. The residue at position 27 (threonine 27) is a Phosphothreonine. In terms of domain architecture, PH spans 58–155 (MENVYGYLMK…WVSRLQICTQ (98 aa)). Tyrosine 62 is modified (phosphotyrosine). Residues 158-188 (TEAIGKNNPPLKSRSFSLASSSNSPISQRRP) are disordered. Residues 170–184 (SRSFSLASSSNSPIS) are compositionally biased toward low complexity. 6 positions are modified to phosphoserine: serine 172, serine 174, serine 177, serine 181, serine 184, and serine 189. Basic and acidic residues predominate over residues 689 to 713 (EIDKATEHKHTLEERQRTEERHRTE). The segment at 689–714 (EIDKATEHKHTLEERQRTEERHRTET) is disordered.

This sequence belongs to the OSBP family. Heterodimer with OSBPL9. Present at highest levels in ovary, testis, kidney, liver, stomach, brain, and adipose tissue. Strong expression (at protein level) in epithelial cells of kidney tubules, testicular tubules, caecum, and skin. Present at low levels in subcutaneous and visceral adipose tissue (at protein level).

It localises to the late endosome membrane. The protein resides in the golgi apparatus. The protein localises to the trans-Golgi network membrane. It catalyses the reaction a 1,2-diacyl-sn-glycero-3-phospho-(1D-myo-inositol 4-phosphate)(out) + a 1,2-diacyl-sn-glycero-3-phospho-L-serine(in) = a 1,2-diacyl-sn-glycero-3-phospho-(1D-myo-inositol 4-phosphate)(in) + a 1,2-diacyl-sn-glycero-3-phospho-L-serine(out). Plays a role in regulating ADIPOQ and FABP4 levels in differentiating adipocytes and is also involved in regulation of adipocyte triglyceride storage. Weakly binds 25-hydroxycholesterol. Interacts with OSBPL9 to function as lipid transfer proteins. Together they form a heterodimer that localizes at the ER-trans-Golgi membrane contact sites, and exchanges phosphatidylserine (1,2-diacyl-sn-glycero-3-phospho-L-serine, PS) for phosphatidylinositol-4-phosphate (1,2-diacyl-sn-glycero-3-phospho-(1D-myo-inositol 4-phosphate), PI(4)P) between the two organelles, a step that is critical for sphingomyelin synthesis in the Golgi complex. This Homo sapiens (Human) protein is Oxysterol-binding protein-related protein 11 (OSBPL11).